Reading from the N-terminus, the 310-residue chain is N-acetyl-gamma-glutamyl-phosphate reductase (310 aa).

Residue C117 is part of the active site.

This sequence belongs to the NAGSA dehydrogenase family. Type 2 subfamily.

It localises to the cytoplasm. The enzyme catalyses N-acetyl-L-glutamate 5-semialdehyde + phosphate + NADP(+) = N-acetyl-L-glutamyl 5-phosphate + NADPH + H(+). It functions in the pathway amino-acid biosynthesis; L-arginine biosynthesis; N(2)-acetyl-L-ornithine from L-glutamate: step 3/4. In terms of biological role, catalyzes the NADPH-dependent reduction of N-acetyl-5-glutamyl phosphate to yield N-acetyl-L-glutamate 5-semialdehyde. The protein is N-acetyl-gamma-glutamyl-phosphate reductase of Brucella ovis (strain ATCC 25840 / 63/290 / NCTC 10512).